Here is a 209-residue protein sequence, read N- to C-terminus: Uracil phosphoribosyltransferase (209 aa).

5-phospho-alpha-D-ribose 1-diphosphate contacts are provided by residues R79, R104, and 131-139 (DPMLATGGS). Uracil contacts are provided by residues I194 and 199-201 (GDA). D200 contacts 5-phospho-alpha-D-ribose 1-diphosphate.

The protein belongs to the UPRTase family. The cofactor is Mg(2+).

The enzyme catalyses UMP + diphosphate = 5-phospho-alpha-D-ribose 1-diphosphate + uracil. Its pathway is pyrimidine metabolism; UMP biosynthesis via salvage pathway; UMP from uracil: step 1/1. With respect to regulation, allosterically activated by GTP. Functionally, catalyzes the conversion of uracil and 5-phospho-alpha-D-ribose 1-diphosphate (PRPP) to UMP and diphosphate. The chain is Uracil phosphoribosyltransferase from Streptococcus uberis (strain ATCC BAA-854 / 0140J).